A 235-amino-acid chain; its full sequence is Sugar fermentation stimulation protein homolog (235 aa).

The protein belongs to the SfsA family.

The chain is Sugar fermentation stimulation protein homolog from Pseudomonas aeruginosa (strain ATCC 15692 / DSM 22644 / CIP 104116 / JCM 14847 / LMG 12228 / 1C / PRS 101 / PAO1).